Reading from the N-terminus, the 1474-residue chain is Alpha-2-macroglobulin (1474 aa).

The signal sequence occupies residues Met1–Ala23. Cysteines 48 and 86 form a disulfide. N-linked (GlcNAc...) (complex) asparagine glycosylation is present at Asn55. N-linked (GlcNAc...) asparagine glycosylation is found at Asn70 and Asn247. Cystine bridges form between Cys251/Cys299 and Cys269/Cys287. N-linked (GlcNAc...) asparagine glycans are attached at residues Asn396 and Asn410. Cystine bridges form between Cys470–Cys563, Cys595–Cys771, Cys642–Cys689, Cys821–Cys849, Cys847–Cys883, Cys921–Cys1321, Cys1079–Cys1127, and Cys1352–Cys1467. The segment at Pro690–Thr728 is bait region. Isoglutamyl lysine isopeptide (Gln-Lys) (interchain with K-? in other proteins) cross-links involve residues Gln693 and Gln694. Inhibitory stretches follow at residues Arg704 to Glu709, Arg719 to Val723, and Thr730 to Phe735. Asn869 is a glycosylation site (N-linked (GlcNAc...) asparagine). Residues Cys972–Gln975 constitute a cross-link (isoglutamyl cysteine thioester (Cys-Gln)). Asn991 is a glycosylation site (N-linked (GlcNAc...) asparagine). The N-linked (GlcNAc...) (complex) asparagine glycan is linked to Asn1424.

Belongs to the protease inhibitor I39 (alpha-2-macroglobulin) family. As to quaternary structure, homotetramer; disulfide-linked. Secreted in plasma.

It is found in the secreted. Is able to inhibit all four classes of proteinases by a unique 'trapping' mechanism. This protein has a peptide stretch, called the 'bait region' which contains specific cleavage sites for different proteinases. When a proteinase cleaves the bait region, a conformational change is induced in the protein which traps the proteinase. The entrapped enzyme remains active against low molecular weight substrates (activity against high molecular weight substrates is greatly reduced). Following cleavage in the bait region, a thioester bond is hydrolyzed and mediates the covalent binding of the protein to the proteinase. The sequence is that of Alpha-2-macroglobulin (A2M) from Homo sapiens (Human).